Reading from the N-terminus, the 362-residue chain is 3-dehydroquinate synthase (362 aa).

The protein belongs to the archaeal-type DHQ synthase family.

It carries out the reaction 2-amino-2,3,7-trideoxy-D-lyxo-hept-6-ulosonate + NAD(+) + H2O = 3-dehydroquinate + NH4(+) + NADH + H(+). Catalyzes the oxidative deamination and cyclization of 2-amino-3,7-dideoxy-D-threo-hept-6-ulosonic acid (ADH) to yield 3-dehydroquinate (DHQ), which is fed into the canonical shikimic pathway of aromatic amino acid biosynthesis. The protein is 3-dehydroquinate synthase of Methanococcus aeolicus (strain ATCC BAA-1280 / DSM 17508 / OCM 812 / Nankai-3).